We begin with the raw amino-acid sequence, 126 residues long: Glycine cleavage system H protein (126 aa).

The 83-residue stretch at T24 to K106 folds into the Lipoyl-binding domain. K65 is subject to N6-lipoyllysine.

This sequence belongs to the GcvH family. The glycine cleavage system is composed of four proteins: P, T, L and H. It depends on (R)-lipoate as a cofactor.

Its function is as follows. The glycine cleavage system catalyzes the degradation of glycine. The H protein shuttles the methylamine group of glycine from the P protein to the T protein. This chain is Glycine cleavage system H protein, found in Psychrobacter sp. (strain PRwf-1).